Reading from the N-terminus, the 264-residue chain is Thymidylate synthase (264 aa).

Arg-21 is a dUMP binding site. His-51 contributes to the (6R)-5,10-methylene-5,6,7,8-tetrahydrofolate binding site. A dUMP-binding site is contributed by 126 to 127; sequence RR. Cys-146 (nucleophile) is an active-site residue. DUMP contacts are provided by residues 166–169, Asn-177, and 207–209; these read RSAD and HLY. Asp-169 is a (6R)-5,10-methylene-5,6,7,8-tetrahydrofolate binding site. Ala-263 contributes to the (6R)-5,10-methylene-5,6,7,8-tetrahydrofolate binding site.

It belongs to the thymidylate synthase family. Bacterial-type ThyA subfamily. As to quaternary structure, homodimer.

It is found in the cytoplasm. The catalysed reaction is dUMP + (6R)-5,10-methylene-5,6,7,8-tetrahydrofolate = 7,8-dihydrofolate + dTMP. It functions in the pathway pyrimidine metabolism; dTTP biosynthesis. Its function is as follows. Catalyzes the reductive methylation of 2'-deoxyuridine-5'-monophosphate (dUMP) to 2'-deoxythymidine-5'-monophosphate (dTMP) while utilizing 5,10-methylenetetrahydrofolate (mTHF) as the methyl donor and reductant in the reaction, yielding dihydrofolate (DHF) as a by-product. This enzymatic reaction provides an intracellular de novo source of dTMP, an essential precursor for DNA biosynthesis. In Bartonella tribocorum (strain CIP 105476 / IBS 506), this protein is Thymidylate synthase.